The primary structure comprises 135 residues: Protein NrdI (135 aa).

The protein belongs to the NrdI family.

In terms of biological role, probably involved in ribonucleotide reductase function. The sequence is that of Protein NrdI from Rhizobium johnstonii (strain DSM 114642 / LMG 32736 / 3841) (Rhizobium leguminosarum bv. viciae).